The primary structure comprises 675 residues: DNA ligase (675 aa).

NAD(+) is bound by residues 41-45 (DAEYD), 90-91 (SL), and E120. Residue K122 is the N6-AMP-lysine intermediate of the active site. The NAD(+) site is built by R143, E178, K295, and K319. Zn(2+) contacts are provided by C413, C416, C431, and C436. Residues 596–675 (GVPQTFAGKT…ADFLQLIDRV (80 aa)) form the BRCT domain.

It belongs to the NAD-dependent DNA ligase family. LigA subfamily. The cofactor is Mg(2+). Mn(2+) serves as cofactor.

The enzyme catalyses NAD(+) + (deoxyribonucleotide)n-3'-hydroxyl + 5'-phospho-(deoxyribonucleotide)m = (deoxyribonucleotide)n+m + AMP + beta-nicotinamide D-nucleotide.. DNA ligase that catalyzes the formation of phosphodiester linkages between 5'-phosphoryl and 3'-hydroxyl groups in double-stranded DNA using NAD as a coenzyme and as the energy source for the reaction. It is essential for DNA replication and repair of damaged DNA. This chain is DNA ligase, found in Heliobacterium modesticaldum (strain ATCC 51547 / Ice1).